Here is a 423-residue protein sequence, read N- to C-terminus: Aspartic protease-like protein pytH (423 aa).

Residues 1–16 (MWLSVALLTLLDGALA) form the signal peptide. A Peptidase A1 domain is found at 38–416 (TTDAIQIGTP…DFDKLRVGLA (379 aa)). The active site involves aspartate 56. Asparagine 88, asparagine 97, asparagine 168, asparagine 196, asparagine 231, and asparagine 279 each carry an N-linked (GlcNAc...) asparagine glycan. The active site involves aspartate 291. Asparagine 330 carries an N-linked (GlcNAc...) asparagine glycan. Cysteine 338 and cysteine 377 are oxidised to a cystine.

This sequence belongs to the peptidase A1 family.

The protein operates within secondary metabolite biosynthesis. In terms of biological role, aspartic protease-like protein; part of the gene cluster that mediates the biosynthesis of pyranterreones, a family of antioxidative compounds. The first step of pyranonigrins biosynthesis is performed by the hybrid PKS-NRPS synthetase pytA that condenses 4 malonyl-CoA units ato the acetyl starter unit by the modular PKS of pytA. The acyl chain is then connected to an L-serine through the amide bond by the modular NRPS of pytA. A tetramic acid is formed and released from the PKS-NRPS pytA to give pyranterreone 5 with the help of the thioesterase pytI. Pyranterreone 5 could be methylated by pytC to afford pyranterreone 6. Both pyranterreones 5 and 6 are subsequently oxidized by the FAD-linked oxidoreductase pytB and the cytochrome P450 monooxygenase pytD to form the fused gamma-pyrone core, resulting in pyranterreones 7 and 11, respectively. The hydroxy group at C-8 of pyranterreones 7 and 11 are dehydrated by the aspartyl protease pytH to form a delta-7 double bond to give pyranterreones 3 and 1, 2 accordingly. The exo-methylene of pyranterreone 3 could be reduced into a pendant methyl by reductase pytE to provide pyranterreone 4, also known as cordylactam. Pyranterreone 4 can be reconverted to pyranterreone 3 through pytB-catalyzed dehydrogenation or further oxidized to pyranterreones 9 and 10. The chain is Aspartic protease-like protein pytH from Aspergillus terreus (strain NIH 2624 / FGSC A1156).